Consider the following 247-residue polypeptide: 6-carboxyhexanoate--CoA ligase (247 aa).

Belongs to the BioW family. In terms of assembly, homodimer. Requires Mg(2+) as cofactor.

It carries out the reaction heptanedioate + ATP + CoA = 6-carboxyhexanoyl-CoA + AMP + diphosphate. Its pathway is metabolic intermediate metabolism; pimeloyl-CoA biosynthesis; pimeloyl-CoA from pimelate: step 1/1. Functionally, catalyzes the transformation of pimelate into pimeloyl-CoA with concomitant hydrolysis of ATP to AMP. The polypeptide is 6-carboxyhexanoate--CoA ligase (Persephonella marina (strain DSM 14350 / EX-H1)).